A 198-amino-acid chain; its full sequence is CASP-like protein 4B3 (198 aa).

The segment at 1-27 is disordered; it reads MSSSGPPAGDGRDDASGPGPAGAAAAA. The Cytoplasmic segment spans residues 1–51; sequence MSSSGPPAGDGRDDASGPGPAGAAAAADGSVPVSRSIVERWKMEPAAARAR. Over residues 16-27 the composition is skewed to low complexity; the sequence is SGPGPAGAAAAA. Residues 52–72 form a helical membrane-spanning segment; sequence LLLRAVAWLFSLLALVVMASN. At 73-85 the chain is on the extracellular side; it reads KHGHGGAQDFDNY. The chain crosses the membrane as a helical span at residues 86–106; it reads PEYTYCLGISIIAVLYTTAQV. The Cytoplasmic portion of the chain corresponds to 107–124; that stretch reads TRDVHRLSWGRDVIAGRK. Residues 125-145 form a helical membrane-spanning segment; that stretch reads AAAVVDFAGDQVVAYLLMSAL. Topologically, residues 146-166 are extracellular; sequence SAAAPVTDYMRQAADNLFTDS. The helical transmembrane segment at 167 to 187 threads the bilayer; that stretch reads AAAAISMAFLAFLAAGLSALV. At 188 to 198 the chain is on the cytoplasmic side; that stretch reads SGYNLAMEVLV.

The protein belongs to the Casparian strip membrane proteins (CASP) family. Homodimer and heterodimers.

It is found in the cell membrane. The protein is CASP-like protein 4B3 of Oryza sativa subsp. japonica (Rice).